The primary structure comprises 704 residues: Elongation factor G (704 aa).

Positions 8–291 (DRVRNIGIMA…AVIEYLASPV (284 aa)) constitute a tr-type G domain. Residues 17–24 (AHIDAGKT), 90–94 (DTPGH), and 144–147 (NKMD) contribute to the GTP site.

This sequence belongs to the TRAFAC class translation factor GTPase superfamily. Classic translation factor GTPase family. EF-G/EF-2 subfamily.

It is found in the cytoplasm. In terms of biological role, catalyzes the GTP-dependent ribosomal translocation step during translation elongation. During this step, the ribosome changes from the pre-translocational (PRE) to the post-translocational (POST) state as the newly formed A-site-bound peptidyl-tRNA and P-site-bound deacylated tRNA move to the P and E sites, respectively. Catalyzes the coordinated movement of the two tRNA molecules, the mRNA and conformational changes in the ribosome. The polypeptide is Elongation factor G (Chlorobium chlorochromatii (strain CaD3)).